A 145-amino-acid polypeptide reads, in one-letter code: Peptide methionine sulfoxide reductase MsrB (145 aa).

A MsrB domain is found at 4–127; the sequence is KEELRQRIGD…NSAALKFIPY (124 aa). The active-site Nucleophile is Cys116.

The protein belongs to the MsrB Met sulfoxide reductase family.

The catalysed reaction is L-methionyl-[protein] + [thioredoxin]-disulfide + H2O = L-methionyl-(R)-S-oxide-[protein] + [thioredoxin]-dithiol. The protein is Peptide methionine sulfoxide reductase MsrB of Streptococcus equi subsp. zooepidemicus (strain H70).